The following is a 194-amino-acid chain: dCTP deaminase (194 aa).

DCTP-binding positions include 110–115, D128, 136–138, Y171, K178, and Q182; these read RSSLAR and VLE. Residue E138 is the Proton donor/acceptor of the active site.

It belongs to the dCTP deaminase family. In terms of assembly, homotrimer.

It catalyses the reaction dCTP + H2O + H(+) = dUTP + NH4(+). Its pathway is pyrimidine metabolism; dUMP biosynthesis; dUMP from dCTP (dUTP route): step 1/2. Functionally, catalyzes the deamination of dCTP to dUTP. The protein is dCTP deaminase of Haemophilus ducreyi (strain 35000HP / ATCC 700724).